The following is a 145-amino-acid chain: 3-hydroxyacyl-[acyl-carrier-protein] dehydratase FabZ (145 aa).

The active site involves His-47.

The protein belongs to the thioester dehydratase family. FabZ subfamily.

The protein resides in the cytoplasm. It carries out the reaction a (3R)-hydroxyacyl-[ACP] = a (2E)-enoyl-[ACP] + H2O. In terms of biological role, involved in unsaturated fatty acids biosynthesis. Catalyzes the dehydration of short chain beta-hydroxyacyl-ACPs and long chain saturated and unsaturated beta-hydroxyacyl-ACPs. The chain is 3-hydroxyacyl-[acyl-carrier-protein] dehydratase FabZ from Aromatoleum aromaticum (strain DSM 19018 / LMG 30748 / EbN1) (Azoarcus sp. (strain EbN1)).